The primary structure comprises 325 residues: Brorin (325 aa).

The N-terminal stretch at 1–27 (MPSSTAMAVGALSSSLLVTCCLMVALC) is a signal peptide. A disordered region spans residues 37–121 (AQAPEQPGQE…RPRGDTPQAE (85 aa)). 2 stretches are compositionally biased toward basic and acidic residues: residues 44–56 (GQEKREHASRDGP) and 64–78 (RPARDEGGSGRDWKS). The Mediates cell adhesion signature appears at 114-116 (RGD). 2 consecutive VWFC domains span residues 153–212 (KGCV…PQCK) and 216–274 (NYCE…PICK).

In terms of assembly, peripherally associated with AMPAR complex. AMPAR complex consists of an inner core made of 4 pore-forming GluA/GRIA proteins (GRIA1, GRIA2, GRIA3 and GRIA4) and 4 major auxiliary subunits arranged in a twofold symmetry. One of the two pairs of distinct binding sites is occupied either by CNIH2, CNIH3 or CACNG2, CACNG3. The other harbors CACNG2, CACNG3, CACNG4, CACNG8 or GSG1L. This inner core of AMPAR complex is complemented by outer core constituents binding directly to the GluA/GRIA proteins at sites distinct from the interaction sites of the inner core constituents. Outer core constituents include at least PRRT1, PRRT2, CKAMP44/SHISA9, FRRS1L and NRN1. The proteins of the inner and outer core serve as a platform for other, more peripherally associated AMPAR constituents, including VWC2. Alone or in combination, these auxiliary subunits control the gating and pharmacology of the AMPAR complex and profoundly impact their biogenesis and protein processing.

Its subcellular location is the secreted. It localises to the extracellular space. The protein localises to the extracellular matrix. The protein resides in the basement membrane. It is found in the synapse. BMP antagonist which may play a role in neural development. Promotes cell adhesion. In Homo sapiens (Human), this protein is Brorin (VWC2).